Here is a 419-residue protein sequence, read N- to C-terminus: Serine hydroxymethyltransferase (419 aa).

(6S)-5,6,7,8-tetrahydrofolate contacts are provided by residues L121 and 125–127; that span reads GHL. K231 is modified (N6-(pyridoxal phosphate)lysine).

The protein belongs to the SHMT family. As to quaternary structure, homodimer. Requires pyridoxal 5'-phosphate as cofactor.

It localises to the cytoplasm. The enzyme catalyses (6R)-5,10-methylene-5,6,7,8-tetrahydrofolate + glycine + H2O = (6S)-5,6,7,8-tetrahydrofolate + L-serine. It participates in one-carbon metabolism; tetrahydrofolate interconversion. It functions in the pathway amino-acid biosynthesis; glycine biosynthesis; glycine from L-serine: step 1/1. Its function is as follows. Catalyzes the reversible interconversion of serine and glycine with tetrahydrofolate (THF) serving as the one-carbon carrier. This reaction serves as the major source of one-carbon groups required for the biosynthesis of purines, thymidylate, methionine, and other important biomolecules. Also exhibits THF-independent aldolase activity toward beta-hydroxyamino acids, producing glycine and aldehydes, via a retro-aldol mechanism. The polypeptide is Serine hydroxymethyltransferase (Phytoplasma mali (strain AT)).